A 337-amino-acid chain; its full sequence is MSIARRTTLSKFLIEQQRETNNLPADLRLLIEVVARACKAISYNVSKGALGDALGTAGSENVQGEVQKKLDILSNEILLDANEWGGNLAAMASEEMETFFPIPANYPRGEYLLVFDPLDGSSNIDVNVSIGTIFSVLRCPDGKQATEESFLQPGTQQVAAGYAVYGPQTVFVLTTGNGVNCFTLDREVGSWVLTQSNMQIPADTREYAINASNARHWYDPVKRYVDELNAGKDGPRGDNFNMRWIASMVADVHRILNRGGIFMYPADKRTPDRPGKLRLMYEANPMAFIVEQAGGAATTGTQRIMEVQPTGLHQRVPVFLGSKNEVERVTAYHHESQ.

Residues E94, D116, L118, and D119 each contribute to the Mg(2+) site. Residues 119-122 (DGSS), N210, and K276 contribute to the substrate site. Residue E282 coordinates Mg(2+).

Belongs to the FBPase class 1 family. As to quaternary structure, homotetramer. Requires Mg(2+) as cofactor.

Its subcellular location is the cytoplasm. The enzyme catalyses beta-D-fructose 1,6-bisphosphate + H2O = beta-D-fructose 6-phosphate + phosphate. It participates in carbohydrate biosynthesis; gluconeogenesis. In Burkholderia multivorans (strain ATCC 17616 / 249), this protein is Fructose-1,6-bisphosphatase class 1.